A 484-amino-acid chain; its full sequence is Glutamate--tRNA ligase (484 aa).

The 'HIGH' region motif lies at 11 to 21 (PSPTGYLHIGN). Positions 252–256 (KLSKR) match the 'KMSKS' region motif. Lys-255 contacts ATP.

It belongs to the class-I aminoacyl-tRNA synthetase family. Glutamate--tRNA ligase type 1 subfamily. In terms of assembly, monomer.

It localises to the cytoplasm. It carries out the reaction tRNA(Glu) + L-glutamate + ATP = L-glutamyl-tRNA(Glu) + AMP + diphosphate. Its function is as follows. Catalyzes the attachment of glutamate to tRNA(Glu) in a two-step reaction: glutamate is first activated by ATP to form Glu-AMP and then transferred to the acceptor end of tRNA(Glu). This chain is Glutamate--tRNA ligase, found in Staphylococcus aureus (strain bovine RF122 / ET3-1).